Reading from the N-terminus, the 148-residue chain is Cathelicidin-1 (148 aa).

Positions 1 to 17 are cleaved as a signal peptide; that stretch reads MLSCWVLLLALLGGACA. Positions 18 to 122 are excised as a propeptide; sequence LPAPLGYSQA…TCVDSMADPV (105 aa). Disulfide bonds link cysteine 75–cysteine 86 and cysteine 97–cysteine 114.

This sequence belongs to the cathelicidin family. In terms of tissue distribution, detected in gizzard, liver, small intestine, large intestine, cloaca, bursa of Fabricius, gall bladder, lung, trachea, kidney, testis and bone marrow.

It localises to the secreted. Its function is as follows. Binds bacterial lipopolysaccharide (LPS). Has potent antimicrobial activity against Gram-positive and Gram-negative bacteria (in vitro). Has hemolytic activity (in vitro). May play a role in the innate immune response. The sequence is that of Cathelicidin-1 (CATHL1) from Gallus gallus (Chicken).